Here is a 245-residue protein sequence, read N- to C-terminus: MTSTQAVSFDTFQLAAATADLSDESAASDYADIVEFRLDLAYADTSLPDPLTAISAYDHSSSLPLIVTNRPEWEGGAYDGETIDRLEMLITAAKHDAVIAVDIELETLKSQHGKKVARDIRNSGAVIIASTHDFTSTPQQSVLHERLHTAAQLGDIGKLAVTAQTHRDALRVLAATEQASQWGDTVATMAMGALGQHTRVVAPLYGSRIGYAPVNPTDATAPGQYDIKTLSEMIDTLTHTKVEDD.

3-dehydroquinate-binding positions include 35-37 (EFR) and Arg70. Residue His132 is the Proton donor/acceptor of the active site. Catalysis depends on Lys158, which acts as the Schiff-base intermediate with substrate. 3-dehydroquinate-binding residues include Arg199, Thr220, and Gln224.

The protein belongs to the type-I 3-dehydroquinase family. Homodimer.

It catalyses the reaction 3-dehydroquinate = 3-dehydroshikimate + H2O. It functions in the pathway metabolic intermediate biosynthesis; chorismate biosynthesis; chorismate from D-erythrose 4-phosphate and phosphoenolpyruvate: step 3/7. Functionally, involved in the third step of the chorismate pathway, which leads to the biosynthesis of aromatic amino acids. Catalyzes the cis-dehydration of 3-dehydroquinate (DHQ) and introduces the first double bond of the aromatic ring to yield 3-dehydroshikimate. This is 3-dehydroquinate dehydratase from Haloquadratum walsbyi (strain DSM 16790 / HBSQ001).